Consider the following 190-residue polypeptide: Elongation factor P (190 aa).

This sequence belongs to the elongation factor P family.

It is found in the cytoplasm. It participates in protein biosynthesis; polypeptide chain elongation. Its function is as follows. Involved in peptide bond synthesis. Stimulates efficient translation and peptide-bond synthesis on native or reconstituted 70S ribosomes in vitro. Probably functions indirectly by altering the affinity of the ribosome for aminoacyl-tRNA, thus increasing their reactivity as acceptors for peptidyl transferase. This chain is Elongation factor P, found in Hyphomonas neptunium (strain ATCC 15444).